We begin with the raw amino-acid sequence, 311 residues long: Pyrimidine-specific ribonucleoside hydrolase RihA (311 aa).

Residue His240 is part of the active site.

The protein belongs to the IUNH family. RihA subfamily.

Hydrolyzes cytidine or uridine to ribose and cytosine or uracil, respectively. The sequence is that of Pyrimidine-specific ribonucleoside hydrolase RihA from Salmonella newport (strain SL254).